The sequence spans 164 residues: Protein-export protein SecB (164 aa).

This sequence belongs to the SecB family. In terms of assembly, homotetramer, a dimer of dimers. One homotetramer interacts with 1 SecA dimer.

The protein resides in the cytoplasm. In terms of biological role, one of the proteins required for the normal export of preproteins out of the cell cytoplasm. It is a molecular chaperone that binds to a subset of precursor proteins, maintaining them in a translocation-competent state. It also specifically binds to its receptor SecA. The sequence is that of Protein-export protein SecB from Janthinobacterium sp. (strain Marseille) (Minibacterium massiliensis).